The chain runs to 276 residues: Large ribosomal subunit protein uL2 (276 aa).

Positions 224 to 276 are disordered; that stretch reads AMNPIDHPHGGGEGKTSGGRNPVTPWGVPTKGKKTRKRNKSSNKYIKRVSDKG. A compositionally biased stretch (basic residues) spans 254–270; that stretch reads KGKKTRKRNKSSNKYIK.

This sequence belongs to the universal ribosomal protein uL2 family. As to quaternary structure, part of the 50S ribosomal subunit. Forms a bridge to the 30S subunit in the 70S ribosome.

In terms of biological role, one of the primary rRNA binding proteins. Required for association of the 30S and 50S subunits to form the 70S ribosome, for tRNA binding and peptide bond formation. It has been suggested to have peptidyltransferase activity; this is somewhat controversial. Makes several contacts with the 16S rRNA in the 70S ribosome. The polypeptide is Large ribosomal subunit protein uL2 (Ehrlichia canis (strain Jake)).